Here is a 343-residue protein sequence, read N- to C-terminus: MPISCKSQCGNRAVLKRPKTGDALCKECFFAAFEAEIHHTISSSNLFRLGEKVAVAASGGKDSTVLAHVLKLLNERHNYGLELVLLSIDEGITGYRDDSLETVKQNRDDYQMPLKILSYEELYGWTMDRIVAQIGRSNNCTFCGVFRRQALDRGAKLLGVDSIATGHNADDIAETVLMNVLRGDTARLRRCTSIRTGGGEDTIPRVKPLKYSYEKEIVMYAHYKKLVYFSTECVFAPNAYRGHARAFLKDLEKVRPSVIMDIIYSGEQLRFKDTVKKPERGTCIRCGFVSSQQPCKACVLLEGLNRGLPKLGIGKKSKGERMIAKQDQELALRERAHLVKNDF.

It belongs to the TtcA family. CTU1/NCS6/ATPBD3 subfamily.

It is found in the cytoplasm. The protein operates within tRNA modification; 5-methoxycarbonylmethyl-2-thiouridine-tRNA biosynthesis. Its function is as follows. Plays a central role in 2-thiolation of mcm(5)S(2)U at tRNA wobble positions of tRNA(Lys), tRNA(Glu) and tRNA(Gln). Directly binds tRNAs and probably acts by catalyzing adenylation of tRNAs, an intermediate required for 2-thiolation. It is unclear whether it acts as a sulfurtransferase that transfers sulfur from thiocarboxylated URM1 onto the uridine of tRNAs at wobble position. The chain is Cytoplasmic tRNA 2-thiolation protein 1 from Drosophila yakuba (Fruit fly).